Consider the following 1025-residue polypeptide: Dihydropyrimidine dehydrogenase [NADP(+)] (1025 aa).

Positions 1-3 (MAP) are excised as a propeptide. A 4Fe-4S ferredoxin-type 1 domain is found at 69 to 100 (ERGALREAMRCLKCADAPCQKSCPTHLDIKSF). [4Fe-4S] cluster-binding residues include cysteine 79, cysteine 82, cysteine 87, and cysteine 91. An FAD-binding site is contributed by valine 129. The [4Fe-4S] cluster site is built by cysteine 130, cysteine 136, cysteine 140, and glutamine 156. FAD is bound by residues 194 to 198 (GAGPA), 218 to 226 (EKQEYVGGL), arginine 235, and leucine 261. NADP(+)-binding positions include 340 to 343 (AGDT), 364 to 365 (RK), and arginine 371. At lysine 384 the chain carries N6-acetyllysine. Residues 437 to 439 (AFG) and 481 to 487 (DIVGMAN) each bind NADP(+). 480-489 (GDIVGMANTT) is a binding site for FAD. FMN is bound by residues serine 550 and 574–575 (KT). Substrate contacts are provided by residues asparagine 609 and 668-670 (NLS). Cysteine 671 acts as the Proton acceptor in catalysis. Position 709 (lysine 709) interacts with FMN. Position 736 to 737 (736 to 737 (NT)) interacts with substrate. FMN is bound by residues glycine 767, 793–795 (TGG), and 816–817 (CS). 4Fe-4S ferredoxin-type domains are found at residues 944-976 (VVAVIDEEMCINCGKCYMTCNDSGYQAIQFDPE) and 978-1007 (HLPTVTDTCTGCTLCLSVCPIIDCIRMVSR). [4Fe-4S] cluster is bound by residues cysteine 953, cysteine 956, cysteine 959, cysteine 963, cysteine 986, cysteine 989, cysteine 992, and cysteine 996.

This sequence belongs to the dihydropyrimidine dehydrogenase family. In terms of assembly, homodimer. The cofactor is FAD. It depends on FMN as a cofactor. Requires [4Fe-4S] cluster as cofactor.

Its subcellular location is the cytoplasm. It catalyses the reaction 5,6-dihydrouracil + NADP(+) = uracil + NADPH + H(+). It carries out the reaction 5,6-dihydrothymine + NADP(+) = thymine + NADPH + H(+). The protein operates within amino-acid biosynthesis; beta-alanine biosynthesis. Inactivated by 5-iodouracil. Involved in pyrimidine base degradation. Catalyzes the reduction of uracil and thymine. The sequence is that of Dihydropyrimidine dehydrogenase [NADP(+)] (DPYD) from Sus scrofa (Pig).